A 1097-amino-acid chain; its full sequence is DNA-directed RNA polymerase subunit beta (1097 aa).

The disordered stretch occupies residues 1073–1097; that stretch reads DVNPRRSTPSRPTYESLGVADYDED.

Belongs to the RNA polymerase beta chain family. In cyanobacteria the RNAP catalytic core is composed of 2 alpha, 1 beta, 1 beta', 1 gamma and 1 omega subunit. When a sigma factor is associated with the core the holoenzyme is formed, which can initiate transcription.

It catalyses the reaction RNA(n) + a ribonucleoside 5'-triphosphate = RNA(n+1) + diphosphate. In terms of biological role, DNA-dependent RNA polymerase catalyzes the transcription of DNA into RNA using the four ribonucleoside triphosphates as substrates. The sequence is that of DNA-directed RNA polymerase subunit beta from Synechococcus sp. (strain RCC307).